The primary structure comprises 586 residues: Pectinesterase 1 (586 aa).

Positions 1–49 are cleaved as a signal peptide; that stretch reads MDSVNSFKGYGKVDEAQDLALKKKTRKRLLLLSISVVVLIAVIIAAVVA. N-linked (GlcNAc...) asparagine glycosylation is found at Asn-57, Asn-97, Asn-154, Asn-201, and Asn-207. Residues 250-253 carry the RRLM cleavage motif motif; sequence RRLM. The short motif at 269–272 is the RRLL cleavage motif element; that stretch reads RRLL. Substrate is bound by residues Thr-355 and Gln-385. Asp-408 serves as the catalytic Proton donor. Cys-422 and Cys-442 are disulfide-bonded. Asp-429 (nucleophile) is an active-site residue. N-linked (GlcNAc...) asparagine glycosylation is present at Asn-466. Substrate contacts are provided by Arg-492 and Trp-494.

The protein in the N-terminal section; belongs to the PMEI family. In the C-terminal section; belongs to the pectinesterase family. Interacts with SBT6.1. As to expression, expressed in siliques.

It localises to the secreted. It is found in the cell wall. The protein resides in the golgi apparatus membrane. The catalysed reaction is [(1-&gt;4)-alpha-D-galacturonosyl methyl ester](n) + n H2O = [(1-&gt;4)-alpha-D-galacturonosyl](n) + n methanol + n H(+). The protein operates within glycan metabolism; pectin degradation; 2-dehydro-3-deoxy-D-gluconate from pectin: step 1/5. In terms of biological role, acts in the modification of cell walls via demethylesterification of cell wall pectin. Demethylates protein phosphatase 2A (PP2A) that have been reversibly carboxymethylated by LCMT1. Acts as a negative regulators of genes involved in salt stress response. The protein is Pectinesterase 1 (PME1) of Arabidopsis thaliana (Mouse-ear cress).